Here is a 263-residue protein sequence, read N- to C-terminus: MARGPKKHLKRVAAPKHWMLDKLTGVFAPRPSTGPHKLRECLPLIIFLRNRLKYALTGDEVKKICMQRFIKIDGKVRTDITYPAGFMDVISIEKTGEHFRLVYDTKGRFAVHRITAEEAKYKLCKVRKIFVGTKGIPHLVTHDARTIRYPDPLIKVNDTIQIDLETGKITDFIKFDTGNLCMVTGGANLGRIGVITNRERHPGSFDVVHVKDANGNSFATRLSNIFVIGKGNKPWISLPRGKGIRLTIAEERDKRLAAKQSSG.

The 63-residue stretch at 42-104 (LPLIIFLRNR…TGEHFRLVYD (63 aa)) folds into the S4 RNA-binding domain.

Belongs to the eukaryotic ribosomal protein eS4 family.

The protein is Small ribosomal subunit protein eS4 (RPS4) of Gallus gallus (Chicken).